A 557-amino-acid polypeptide reads, in one-letter code: DNA 3'-5' helicase XPB (557 aa).

The tract at residues 1–135 (MTDGPLIVQS…APLLGTRIAP (135 aa)) is required for protein stability or solubility. Positions 190–344 (VDNFWNGGSG…DVFSLIGPKR (155 aa)) constitute a Helicase ATP-binding domain. Residue 203 to 210 (LPCGAGKT) participates in ATP binding. Positions 298–301 (DEVH) match the DEAH box motif. A Helicase C-terminal domain is found at 398 to 544 (RVVEKLVAQH…AYRIVDADDI (147 aa)).

The protein belongs to the helicase family. RAD25/XPB subfamily. As to quaternary structure, monomer. The cofactor is Mn(2+). Requires Mg(2+) as cofactor. Ca(2+) serves as cofactor.

It catalyses the reaction Couples ATP hydrolysis with the unwinding of duplex DNA by translocating in the 3'-5' direction.. The enzyme catalyses ATP + H2O = ADP + phosphate + H(+). Its function is as follows. ATP-dependent 3'-5' DNA helicase, unwinds 3'-overhangs, 3'- flaps, and splayed-arm DNA substrates but not 5'-overhangs or 5'-flap substrates. Requires ATP hydrolysis for activity; the ATPase activity is DNA-dependent and requires a minimum of 4 single-stranded nucleotides (nt) with 6-10 nt providing all necessary interactions for full processive unwinding. The ATPase prefers ATP over CTP or GTP, is almost inactive with TTP. This chain is DNA 3'-5' helicase XPB, found in Kineococcus radiotolerans (strain ATCC BAA-149 / DSM 14245 / SRS30216).